The following is a 386-amino-acid chain: Leupaxin (386 aa).

An N-acetylmethionine modification is found at methionine 1. The short motif at 3–15 is the LD motif 1 element; it reads ELDALLEELERST. The segment at 13-41 is disordered; it reads RSTLQDSDEYSNPAPLPLDQHSRKETNLD. At serine 19 the chain carries Phosphoserine. Position 22 is a phosphotyrosine (tyrosine 22). Residue serine 54 is modified to Phosphoserine. Tyrosine 62 carries the phosphotyrosine modification. 2 consecutive short sequence motifs (LD motif) follow at residues 70–82 and 92–103; these read NVYS…KESP and QLDELMAHLTEM. Tyrosine 72 carries the post-translational modification Phosphotyrosine; by LYN. Phosphoserine is present on serine 81. LIM zinc-binding domains lie at 150 to 208, 209 to 267, 268 to 326, and 327 to 386; these read GHCA…QLFS, PRCA…AMFS, PKCG…HRRG, and TLCH…LFPL.

It belongs to the paxillin family. In terms of assembly, interacts with PTPN22. Interacts with unphosphorylated ITGA4. Interacts with PTK2B/PYK2, PTPN12, AR and SRF. Interacts (via LD motif 3) with LYN and the interaction is induced upon B-cell antigen receptor (BCR) activation. Interacts (via LD motif 3) with PTK2/FAK. Post-translationally, phosphorylated on tyrosine residues. Phosphorylation on Tyr-72 is important for its inhibitory function. Bombesin stimulates phosphorylation on Tyr-22, Tyr-62 and Tyr-72. In terms of tissue distribution, macrophages, monocytes and osteoclasts (at protein level). Strongly expressed in cells and tissues of hematopoietic origin. Highest expression in lymphoid tissues such as spleen, lymph node, thymus and appendix and in the vascular smooth muscle. Lower levels in bone marrow and fetal liver. Also expressed in peripheral blood lymphocytes and a number of hematopoietic cell lines. Very low levels found in epithelial cell lines. Expressed in prostate cancer (PCa) cells and its expression intensity is directly linked to PCa progression.

The protein localises to the cytoplasm. Its subcellular location is the cell junction. The protein resides in the focal adhesion. It localises to the nucleus. It is found in the perinuclear region. The protein localises to the cell projection. Its subcellular location is the podosome. The protein resides in the cell membrane. In terms of biological role, transcriptional coactivator for androgen receptor (AR) and serum response factor (SRF). Contributes to the regulation of cell adhesion, spreading and cell migration and acts as a negative regulator in integrin-mediated cell adhesion events. Suppresses the integrin-induced tyrosine phosphorylation of paxillin (PXN). May play a critical role as an adapter protein in the formation of the adhesion zone in osteoclasts. Negatively regulates B-cell antigen receptor (BCR) signaling. This is Leupaxin (LPXN) from Homo sapiens (Human).